The primary structure comprises 186 residues: DNA damage up-regulated protein (186 aa).

The disordered stretch occupies residues Ala147–Ser166.

In terms of assembly, interacts with DNA damage response proteins ATR, H2AX, PCNA, RAD18 and RAD51C. Forms a complex with H2AX and RAD18 following DDUP phosphorylation. In terms of processing, phosphorylated in an ATR-dependent manner; phosphorylation is required for interaction with H2AX and RAD18 and for DDUP-mediated DNA damage repair.

It is found in the nucleus. The protein resides in the chromosome. Functionally, promotes DNA damage repair through both homologous recombination repair (HRR) and post-replication repair (PRR) mechanisms. Enhances the retention of DNA damage response protein RAD18 at sites of DNA damage. This allows for HRR via association of RAD18 with RAD51C and for PRR via RAD18-mediated promotion of PCNA monoubiquitination. The polypeptide is DNA damage up-regulated protein (Homo sapiens (Human)).